The following is a 428-amino-acid chain: Serine--tRNA ligase (428 aa).

Position 233–235 (233–235 (TAE)) interacts with L-serine. 264-266 (RRE) contacts ATP. Position 287 (Glu-287) interacts with L-serine. Residue 351-354 (EVSS) participates in ATP binding. An L-serine-binding site is contributed by Ser-387.

The protein belongs to the class-II aminoacyl-tRNA synthetase family. Type-1 seryl-tRNA synthetase subfamily. As to quaternary structure, homodimer. The tRNA molecule binds across the dimer.

The protein localises to the cytoplasm. The enzyme catalyses tRNA(Ser) + L-serine + ATP = L-seryl-tRNA(Ser) + AMP + diphosphate + H(+). The catalysed reaction is tRNA(Sec) + L-serine + ATP = L-seryl-tRNA(Sec) + AMP + diphosphate + H(+). It participates in aminoacyl-tRNA biosynthesis; selenocysteinyl-tRNA(Sec) biosynthesis; L-seryl-tRNA(Sec) from L-serine and tRNA(Sec): step 1/1. Catalyzes the attachment of serine to tRNA(Ser). Is also able to aminoacylate tRNA(Sec) with serine, to form the misacylated tRNA L-seryl-tRNA(Sec), which will be further converted into selenocysteinyl-tRNA(Sec). This Salinibacter ruber (strain DSM 13855 / M31) protein is Serine--tRNA ligase.